A 44-amino-acid polypeptide reads, in one-letter code: Cytochrome b559 subunit beta (44 aa).

The chain crosses the membrane as a helical span at residues 19–35 (WLAIHGIAVPTIFFLGA). Residue H23 participates in heme binding.

This sequence belongs to the PsbE/PsbF family. In terms of assembly, heterodimer of an alpha subunit and a beta subunit. PSII is composed of 1 copy each of membrane proteins PsbA, PsbB, PsbC, PsbD, PsbE, PsbF, PsbH, PsbI, PsbJ, PsbK, PsbL, PsbM, PsbT, PsbX, PsbY, PsbZ, Psb30/Ycf12, at least 3 peripheral proteins of the oxygen-evolving complex and a large number of cofactors. It forms dimeric complexes. It depends on heme b as a cofactor.

The protein resides in the plastid. The protein localises to the chloroplast thylakoid membrane. Its function is as follows. This b-type cytochrome is tightly associated with the reaction center of photosystem II (PSII). PSII is a light-driven water:plastoquinone oxidoreductase that uses light energy to abstract electrons from H(2)O, generating O(2) and a proton gradient subsequently used for ATP formation. It consists of a core antenna complex that captures photons, and an electron transfer chain that converts photonic excitation into a charge separation. This is Cytochrome b559 subunit beta from Chlamydomonas reinhardtii (Chlamydomonas smithii).